The chain runs to 186 residues: MGLKSDAWIRKMSHEKAMIVPFAEEQVGRGVVSYGVSSYGYDIRVGDEFKIFTNIGGTVVDPKNFDEKNVVDFKGDVCIVPPNSFALARTIEYFNMPDNVLAICLGKSTYARCGIIVNVTPFEPGFKGHITIEISNTTPLPAKIYANEGIAQVLFIEGDEPCEVTYADKKGKYQAQEGITLPRILK.

Residue 107-112 (KSTYAR) participates in dCTP binding. E133 functions as the Proton donor/acceptor in the catalytic mechanism. DCTP is bound by residues Q152, Y166, and Q176.

Belongs to the dCTP deaminase family. As to quaternary structure, homotrimer.

It catalyses the reaction dCTP + H2O + H(+) = dUTP + NH4(+). Its pathway is pyrimidine metabolism; dUMP biosynthesis; dUMP from dCTP (dUTP route): step 1/2. Catalyzes the deamination of dCTP to dUTP. The protein is dCTP deaminase of Campylobacter curvus (strain 525.92).